We begin with the raw amino-acid sequence, 255 residues long: Acetylglutamate kinase (255 aa).

Substrate-binding positions include glycine 40–glycine 41, arginine 62, and asparagine 153.

This sequence belongs to the acetylglutamate kinase family. ArgB subfamily.

The protein resides in the cytoplasm. It catalyses the reaction N-acetyl-L-glutamate + ATP = N-acetyl-L-glutamyl 5-phosphate + ADP. It functions in the pathway amino-acid biosynthesis; L-arginine biosynthesis; N(2)-acetyl-L-ornithine from L-glutamate: step 2/4. In terms of biological role, catalyzes the ATP-dependent phosphorylation of N-acetyl-L-glutamate. The sequence is that of Acetylglutamate kinase from Bacillus cereus (strain B4264).